The following is a 206-amino-acid chain: Triafestin-1 (206 aa).

Residues M1 to A18 form the signal peptide. N55 is a glycosylation site (N-linked (GlcNAc...) asparagine).

The protein belongs to the calycin superfamily. Triabin family. Interacts with host coagulation factor XII (F12) (inactive and activated) (via amino acids 1-77). Interacts with host high molecular weight kininogen (KNG1) (via amino acids 402-532). As to expression, salivary gland (at protein level).

It is found in the secreted. With respect to regulation, zn(2+) modulates binding to host coagulation factor XII (F12) and high molecular weight kininogen (KNG1). Functionally, suppresses activation of the host plasma kallikrein-kinin system, leading to inhibition of the intrinsic coagulation pathway. Blocks host coagulation factor XII (F12) and prekallikrein (KLKB1) reciprocal activation without affecting their amidolytic activities. Blocks binding of host F12 and high molecular weight kininogen (KNG1) to negatively charged surfaces. Attenuates generation of bradykinin by interfering with activation of host kallikrein-kinin system. The protein is Triafestin-1 of Triatoma infestans (Assassin bug).